Consider the following 1663-residue polypeptide: MLADMCVGVYKAAMNYEIRPHEFSFNTQESLFTGLGLGFLAATAVVASPSLLDLPITAAEVVRIAMRAGILLYQKSQDLEQLSLDSSLESWTTVVRGLDESIVRGELEKFNKSMETPPSSRIYISVVEPDGSVFISGPPSGLREFFNKSGKVQSAPRAPLPVYGGPCHAAHLYDRTHTEWVVSKVNPEIASRRLSGHPLVLSMGDGQPLAGENARDLFESATYVLLTSIIRWDSVLAAVKKLPHWKQDTKLQLETFRPSSPAVHGLISAVQSEYPDCTVSVDDLGDWIIDNSLEPPTIPIDSRIAVVGMSCRLPGGSDDLQRFWELLEDGRDVHQKVPGNRYDVESHTDMTGRRLNTSHTPFGCFIDSPGLFDASFFDMSPREAGQTDPTHRLALLTAYEALEYSGYVPNRTRSTTRDRVGTVYGQCSDDYREANAGQNIDMYFIPGNYRAFAPGRISYFFKFSGPSFNCDTACSASLAAVQIACSALIRGEADMVVAGGLNILTGSDSFAGLSRGFFLSKTGNCKVFDDGADGYCRADGIGSIVLKRLSDAQQDNDNILGVILGTATNHSSHAISITHPHAPTQEHLYRSVLSQAGIGPHDVDLVEMHGTGTQAGDAAEIESVTRVFSPPVPRRSHPLYISSVKANLGHGEAAAGITALMKALLIFQHNAIPRHVGIKTALNSKFPDLERLNVHIPKETIPWPYRSNRKRYVMINNFSAAGGNTSLLLEEPPVRPDPQGPPQTRFVVALSAKSTTSLRRNLESLITWLEGNRSARLASLAYTTTARRMHHKHRIAVHGASVAEIIQALHQRGSRAELGLLVSKPPSVAFIFSGQGSFYAGVGSQLFKEYPPYREQLQRLDEICQQNGFGSILPAITDTDADVSQLSALVTQLTTVCVQIALCRLWRTLGVKPAVVIGASLGEYAALYAAGALSASDAIFLVGQRTLLMQKLCTANSYGMLAVQGSVDDIRRCVQDRTYEVACINAPRSITICASIKDIVDIQQSLVSQGYRSVKLNVPFAFHSSQMDPILDRYEEIAKAVSFRSLQIPLISSTLADAAVQSRSLVASLFLRENTRAPARFAEAVAKAQDMGLVNSHTVWVEIGVHSTYSGAVRATVADLQAIVPSLRSDETNWHTLAVSMCTLQETGVPLDWNEWYRPFEPEVRLLDLPSYRWDLKNHWIQYNGDWLLVKDKRPRTDQISAATPSLRTALVHQIMEESFRPDGGEIVVQSDVMDKEFFAVASGHKMSGRPLVSVFSYPDIAFTLARYMYSRLKPESPLPAMDFGQVRVLQGLLPRKDRSKPQWVRMRMRADPQCAALQLSISGLSDESSRHVEEKLASGVVRCGDRQSWQDEWADYAHLLTTRIVTLQQMAENGQASRVSRDLVYTLFKNIVDYADHYRGIQSAVLHGLEAVADVILAPSNDSRWTAPPHHIDPITHVGGLVLNAGHATDHHNTIYVMEGWKSMRFAEELVAGELYRSYVKMNPARDGSGFFVGDVYVMREDHIVGKVRGMTLRPLPRILMNRFFDPPDDGDGLATQHIQPHDLPQVQHQPSPTTDSGPDDDPKDPNTGPLTPEVDLPVAPSVEKANTKLVRGALALLAAETGVEPDGLTDETEVSALGIDSLLSLVLVEKFATELQVNIQSSFFLESPTIRELKEYLTASW.

The interval 19 to 168 (RPHEFSFNTQ…PLPVYGGPCH (150 aa)) is N-terminal acylcarrier protein transacylase domain (SAT). The 431-residue stretch at 301–731 (DSRIAVVGMS…GGNTSLLLEE (431 aa)) folds into the Ketosynthase family 3 (KS3) domain. Active-site for beta-ketoacyl synthase activity residues include C474, H609, and H650. The segment at 830 to 1149 (FIFSGQGSFY…SMCTLQETGV (320 aa)) is malonyl-CoA:ACP transacylase (MAT) domain. The segment at 1209 to 1527 (TALVHQIMEE…PRILMNRFFD (319 aa)) is product template (PT) domain. Residues 1213-1349 (HQIMEESFRP…GVVRCGDRQS (137 aa)) form an N-terminal hotdog fold region. One can recognise a PKS/mFAS DH domain in the interval 1213–1523 (HQIMEESFRP…LRPLPRILMN (311 aa)). H1245 acts as the Proton acceptor; for dehydratase activity in catalysis. Residues 1376–1523 (QASRVSRDLV…LRPLPRILMN (148 aa)) form a C-terminal hotdog fold region. The active-site Proton donor; for dehydratase activity is the D1434. The tract at residues 1544–1580 (DLPQVQHQPSPTTDSGPDDDPKDPNTGPLTPEVDLPV) is disordered. The region spanning 1586-1663 (KANTKLVRGA…ELKEYLTASW (78 aa)) is the Carrier domain. S1623 carries the post-translational modification O-(pantetheine 4'-phosphoryl)serine.

The cofactor is pantetheine 4'-phosphate.

Its pathway is secondary metabolite biosynthesis. Functionally, non-reducing polyketide synthase; part of the gene cluster that mediates the biosynthesis of the bicoumarin kotanin. The non-reducing polyketide synthase ktnS first catalyzes the formation of the pentaketidic 4,7-dihydroxy-5-methylcoumarin from acetyl coenzyme A and 4 malonyl coenzyme A molecules. Further O-methylation by ktnB leads to the formation of 7-demethylsiderin. Then, an oxidative phenol coupling catalyzed by the cytochrome P450 monooxygenase ktnC forms the 8,8'-dimer P-orlandin via dimerization the monomeric precursor, 7-demethylsiderin. P-orlandin is subsequently O-methylated in a stepwise fashion to demethylkotanin and kotanin. This Aspergillus niger (strain ATCC MYA-4892 / CBS 513.88 / FGSC A1513) protein is Kotanin synthase.